We begin with the raw amino-acid sequence, 348 residues long: NADH-ubiquinone oxidoreductase chain 2 (348 aa).

A run of 9 helical transmembrane segments spans residues 3 to 23 (PYVLMILLSSLGLGTTLTFAS), 60 to 80 (FLTQATAAAMILFASTTNAWM), 96 to 116 (TMFMTALALKIGLAPMHFWMP), 149 to 169 (IDPLLLTLLGVTSTLVGGWGG), 178 to 197 (ILAYSSIAHMGWMIIVIQYA), 202 to 219 (LLALGTYIIMTSAAFLTL), 246 to 266 (LVLLSLGGLPPLTGFMPKWLI), 274 to 294 (DLPIIATTMALAALISLYFYL), and 326 to 346 (LALFTMATLGLLPMTPAILTL).

The protein belongs to the complex I subunit 2 family.

It localises to the mitochondrion inner membrane. It carries out the reaction a ubiquinone + NADH + 5 H(+)(in) = a ubiquinol + NAD(+) + 4 H(+)(out). Its function is as follows. Core subunit of the mitochondrial membrane respiratory chain NADH dehydrogenase (Complex I) that is believed to belong to the minimal assembly required for catalysis. Complex I functions in the transfer of electrons from NADH to the respiratory chain. The immediate electron acceptor for the enzyme is believed to be ubiquinone. The polypeptide is NADH-ubiquinone oxidoreductase chain 2 (MT-ND2) (Carassius auratus (Goldfish)).